The chain runs to 179 residues: MKTIEVDEDLYRFIAGQTERIGESASDILRRLLLVDNQGTVPIEEIVEPKGIVVSKEVGFTPEKFDGVKEMRSLLISDEFASLKKAIDRFMLVLSTLHKIDPLSFSEATQVKGRKRVYFADNEATLLANGNTTKPKAIPQSPFWVITNNNTSRKRQMVEQLMSRMNFQAELIEKVTGSI.

It belongs to the SeqA family. In terms of assembly, homodimer. Polymerizes to form helical filaments.

The protein resides in the cytoplasm. Functionally, negative regulator of replication initiation, which contributes to regulation of DNA replication and ensures that replication initiation occurs exactly once per chromosome per cell cycle. Binds to pairs of hemimethylated GATC sequences in the oriC region, thus preventing assembly of replication proteins and re-initiation at newly replicated origins. Repression is relieved when the region becomes fully methylated. This Vibrio atlanticus (strain LGP32) (Vibrio splendidus (strain Mel32)) protein is Negative modulator of initiation of replication.